The primary structure comprises 394 residues: Cell adhesion molecule 3 (394 aa).

Residues 1–17 form the signal peptide; sequence MHHPVILLLCLSSLAGA. At 18-326 the chain is on the extracellular side; the sequence is ANLPPEDLSQ…PIPSTSSIDH (309 aa). Residues 22 to 120 enclose the Ig-like V-type domain; it reads PEDLSQPVTA…PVRTAKAVVT (99 aa). 2 disulfides stabilise this stretch: Cys45-Cys105 and Cys147-Cys204. Ig-like C2-type domains follow at residues 128–223 and 228–306; these read PQVS…HKIQ and PTAK…TFIT. Residues 217–240 form a disordered region; it reads SSSHKIQVQYKPTAKIESRPSMPR. A compositionally biased stretch (basic and acidic residues) spans 230–240; that stretch reads AKIESRPSMPR. Cys249 and Cys295 are oxidised to a cystine. The chain crosses the membrane as a helical span at residues 327–347; it reads AVIGGVVAVIAFLLFCLLIVL. Over 348–394 the chain is Cytoplasmic; that stretch reads GRYLIRHKGTYLTHEAKGSDDAPDADTAIINAEGGQGGSDDKKEYFI. The interval 363–394 is disordered; it reads AKGSDDAPDADTAIINAEGGQGGSDDKKEYFI.

Belongs to the nectin family.

It is found in the cell membrane. Its subcellular location is the cell junction. Functionally, may be involved in cell-cell adhesion. This is Cell adhesion molecule 3 (cadm3) from Xenopus laevis (African clawed frog).